We begin with the raw amino-acid sequence, 200 residues long: Probable nicotinate-nucleotide adenylyltransferase (200 aa).

Belongs to the NadD family.

It carries out the reaction nicotinate beta-D-ribonucleotide + ATP + H(+) = deamido-NAD(+) + diphosphate. Its pathway is cofactor biosynthesis; NAD(+) biosynthesis; deamido-NAD(+) from nicotinate D-ribonucleotide: step 1/1. Functionally, catalyzes the reversible adenylation of nicotinate mononucleotide (NaMN) to nicotinic acid adenine dinucleotide (NaAD). This Clostridium acetobutylicum (strain ATCC 824 / DSM 792 / JCM 1419 / IAM 19013 / LMG 5710 / NBRC 13948 / NRRL B-527 / VKM B-1787 / 2291 / W) protein is Probable nicotinate-nucleotide adenylyltransferase.